Reading from the N-terminus, the 378-residue chain is uncharacterized protein (378 aa).

11 consecutive transmembrane segments (helical) span residues 12–34 (SLAF…STFF), 44–66 (VKIY…IFLG), 92–112 (SIAL…LMLI), 132–154 (GFAS…IFLA), 161–180 (EVYA…SIIT), 200–222 (TFLL…IAMM), 235–257 (VEIY…FWGV), 267–285 (VFPL…LFFA), 290–312 (LIFV…RVYI), 327–349 (FLSL…FLFI), and 356–373 (LSAL…FIYL).

It localises to the cell membrane. This is an uncharacterized protein from Aquifex aeolicus (strain VF5).